A 409-amino-acid polypeptide reads, in one-letter code: MRSGQSAALAPVLQFTNCRILRGGTLLREDLWVRGGRILDPEKLFFEERRVADEQRDCGGRILAPGFIDVQINGGFGVDFSRATEDVGSGVALVARRLLSHGVTSFCPTLVTSPPEVYHKVLPQIPVKSGGPHGAGVLGVHLEGPFISREKRGAHPEAYLRSFGANAFHDVLATYGPLDNVCIVTLAPELDRSHEVIQALTAKGIRVSLGHSVADLRAAEVAVQSGATFITHLFNAMLPFHHRDPGIVGLLTSDQLPPGHCIFYGMIADGIHTNPAALRIAHRAHPQGLVLVTDAVPALGLGNGRHTLGQQEVEVDGLIAYIAGTKTLSGSIAPMDVCIRHFLQATGCSVESALEAASLHPAQLLGLEKTKGSLDFGADADFVVLDDTLHVQATYISGELVWQAEEAGL.

An a divalent metal cation-binding site is contributed by Glu143. 154–155 (AH) is a substrate binding site. Residues His211 and His232 each coordinate a divalent metal cation. Substrate-binding positions include 235 to 236 (NA), Arg243, and 269 to 272 (DGIH). Asp294 (proton donor/acceptor) is an active-site residue. 328–330 (LSG) is a substrate binding site.

It belongs to the metallo-dependent hydrolases superfamily. NagA family. A divalent metal cation serves as cofactor.

It carries out the reaction N-acetyl-D-glucosamine 6-phosphate + H2O = D-glucosamine 6-phosphate + acetate. It participates in amino-sugar metabolism; N-acetylneuraminate degradation. Its function is as follows. Hydrolyzes the N-glycolyl group from N-glycolylglucosamine 6-phosphate (GlcNGc-6-P) in the N-glycolylneuraminic acid (Neu5Gc) degradation pathway. In Rattus norvegicus (Rat), this protein is N-acetylglucosamine-6-phosphate deacetylase (Amdhd2).